The primary structure comprises 616 residues: MALLQISEPGLSAAPHQRRLAVGIDLGTTHSLVATVRSGQAETLMDSEERYLLPSVVRYHEKGPEIGWLARQQAAYDPANTISSVKRMMGRSLADIQQRYPNLPYQFQASENGLPLINTATGLVDPIQVSSDILKSLVQRAEETLDGKLDGVVITVPAYFDDAQRQGTKDAARLAGLHVLRLLNEPTAAAIAYGLDSGQEGVIAVYDLGGGTFDVSILRLSRGVFEVLATGGDTALGGDDFDLILADWIREQAGIGSRDDHSLQRQLLDMATQVKIALSDADIAEINIAGWQGKITRCEFEALITPLIKRTLLASRRALKDAEVSADEVLQVVMVGGSTRVPLVRHRVGEFFGREPLTSIDPDKVVAVGASIQADILVGNKPDSDMLLLDVIPLSLGLETMGGLVEKIIPRNTTIPVAKAQEFTTFKDGQSAMSIHVVQGERELVSDCRSLARFTLRGIPPLPAGGAHIRVTFQVDADGLLNVSALEKSTGVEAFIQVKPSYGLSDEEIARMIKDSMANAQEDINARQLAEQKVEAARVLESVTSALEKDADLLNEQEQAAIDAAVETLITSVQGNDPEIIENAIKQLDKQTQEFAARRMDSSIRRALAGHSVDEI.

This sequence belongs to the heat shock protein 70 family.

Functionally, chaperone involved in the maturation of iron-sulfur cluster-containing proteins. Has a low intrinsic ATPase activity which is markedly stimulated by HscB. Involved in the maturation of IscU. This is Chaperone protein HscA from Photorhabdus laumondii subsp. laumondii (strain DSM 15139 / CIP 105565 / TT01) (Photorhabdus luminescens subsp. laumondii).